Here is a 502-residue protein sequence, read N- to C-terminus: Glycerol kinase (502 aa).

T14 is a binding site for ADP. 3 residues coordinate ATP: T14, T15, and S16. Residue T14 coordinates sn-glycerol 3-phosphate. ADP is bound at residue R18. R84, E85, Y136, and D246 together coordinate sn-glycerol 3-phosphate. Glycerol contacts are provided by R84, E85, Y136, D246, and Q247. The ADP site is built by T268 and G311. 4 residues coordinate ATP: T268, G311, Q315, and G412. ADP contacts are provided by G412 and N416.

It belongs to the FGGY kinase family. Homotetramer and homodimer (in equilibrium). Heterodimer with EIIA-Glc. Binds 1 zinc ion per glycerol kinase EIIA-Glc dimer. The zinc ion is important for dimerization.

The catalysed reaction is glycerol + ATP = sn-glycerol 3-phosphate + ADP + H(+). Its pathway is polyol metabolism; glycerol degradation via glycerol kinase pathway; sn-glycerol 3-phosphate from glycerol: step 1/1. With respect to regulation, activity of this regulatory enzyme is affected by several metabolites. Allosterically and non-competitively inhibited by fructose 1,6-bisphosphate (FBP) and unphosphorylated phosphocarrier protein EIIA-Glc (III-Glc), an integral component of the bacterial phosphotransferase (PTS) system. In terms of biological role, key enzyme in the regulation of glycerol uptake and metabolism. Catalyzes the phosphorylation of glycerol to yield sn-glycerol 3-phosphate. In Escherichia coli O7:K1 (strain IAI39 / ExPEC), this protein is Glycerol kinase.